The primary structure comprises 276 residues: Large ribosomal subunit protein uL2 (276 aa).

2 disordered regions span residues 30–52 (VKGLTEGKNKSGGRNNHGRTTSR) and 224–257 (VMNPVDHPHGGGEGRTSGGRHPVTPWGKPTKGYK). Residues 41 to 52 (GGRNNHGRTTSR) show a composition bias toward polar residues.

This sequence belongs to the universal ribosomal protein uL2 family. Part of the 50S ribosomal subunit. Forms a bridge to the 30S subunit in the 70S ribosome.

One of the primary rRNA binding proteins. Required for association of the 30S and 50S subunits to form the 70S ribosome, for tRNA binding and peptide bond formation. It has been suggested to have peptidyltransferase activity; this is somewhat controversial. Makes several contacts with the 16S rRNA in the 70S ribosome. The sequence is that of Large ribosomal subunit protein uL2 from Gluconacetobacter diazotrophicus (strain ATCC 49037 / DSM 5601 / CCUG 37298 / CIP 103539 / LMG 7603 / PAl5).